The following is a 730-amino-acid chain: Elongation factor 2 (730 aa).

A tr-type G domain is found at 19-260 (QRIRNIGIVA…MVIHFLPNPL (242 aa)). Residues 28 to 35 (AHIDHGKT), 94 to 98 (DTPGH), and 148 to 151 (NKVD) contribute to the GTP site. The residue at position 596 (His-596) is a Diphthamide.

It belongs to the TRAFAC class translation factor GTPase superfamily. Classic translation factor GTPase family. EF-G/EF-2 subfamily.

Its subcellular location is the cytoplasm. Catalyzes the GTP-dependent ribosomal translocation step during translation elongation. During this step, the ribosome changes from the pre-translocational (PRE) to the post-translocational (POST) state as the newly formed A-site-bound peptidyl-tRNA and P-site-bound deacylated tRNA move to the P and E sites, respectively. Catalyzes the coordinated movement of the two tRNA molecules, the mRNA and conformational changes in the ribosome. The protein is Elongation factor 2 of Methanosarcina mazei (strain ATCC BAA-159 / DSM 3647 / Goe1 / Go1 / JCM 11833 / OCM 88) (Methanosarcina frisia).